A 56-amino-acid polypeptide reads, in one-letter code: MIKVKLVRSWIGCKPKQRKVLDALGLRKIRCEKSFEDNAAIRGMIAEVKHLVEVSE.

Belongs to the universal ribosomal protein uL30 family. Part of the 50S ribosomal subunit.

In Nitratidesulfovibrio vulgaris (strain DSM 19637 / Miyazaki F) (Desulfovibrio vulgaris), this protein is Large ribosomal subunit protein uL30.